The primary structure comprises 304 residues: MNRLAVEIPGLSLKNPIMPASGCFGFGQEYSKYYDLNELGAIMAKAVTPEPRLGNPTPRVAETASGMLNAIGLQNPGLEHVLAHELPFLEQFETPIIANVAGATEDDYVQVCSRIGESKAVKAIELNISCPNVKHGGIAFGTDPEVAHRLTKAVKSVASVPVYVKLSPNVADIISIAQAIEAAGADGLTMINTLLGMRIDLKTRKPVIANGTGGLSGPAIKPVAIRMIHQVRAVSNIPIIGMGGVQTVDDVLEFLIAGADAVAVGTMNFTDPFICPKLITELPKRMDELGISSLQELKKELLNQ.

FMN-binding positions include Ser-21 and 45–46 (KA). Substrate contacts are provided by residues Lys-45 and 69 to 73 (NAIGL). Positions 99 and 127 each coordinate FMN. Residue Asn-127 participates in substrate binding. Cys-130 (nucleophile) is an active-site residue. 2 residues coordinate FMN: Lys-165 and Ile-191. 192-193 (NT) lines the substrate pocket. FMN-binding positions include Gly-217, 243 to 244 (GG), and 265 to 266 (GT).

It belongs to the dihydroorotate dehydrogenase family. Type 1 subfamily. Heterotetramer of 2 PyrK and 2 PyrD type B subunits. FMN serves as cofactor.

The protein resides in the cytoplasm. The catalysed reaction is (S)-dihydroorotate + NAD(+) = orotate + NADH + H(+). Its pathway is pyrimidine metabolism; UMP biosynthesis via de novo pathway; orotate from (S)-dihydroorotate (NAD(+) route): step 1/1. Catalyzes the conversion of dihydroorotate to orotate with NAD(+) as electron acceptor. The sequence is that of Dihydroorotate dehydrogenase B (NAD(+)), catalytic subunit (pyrD) from Listeria innocua serovar 6a (strain ATCC BAA-680 / CLIP 11262).